A 237-amino-acid polypeptide reads, in one-letter code: Uridylate kinase (237 aa).

ATP is bound at residue 9-12 (KFSG). Residues 17–22 (GEAGYG) are involved in allosteric activation by GTP. Position 51 (Gly-51) interacts with UMP. ATP contacts are provided by Gly-52 and Arg-56. Residues Asp-72 and 133-140 (TGNPFFTT) contribute to the UMP site. Thr-160, Tyr-166, and Asp-169 together coordinate ATP.

This sequence belongs to the UMP kinase family. In terms of assembly, homohexamer.

It localises to the cytoplasm. The catalysed reaction is UMP + ATP = UDP + ADP. It functions in the pathway pyrimidine metabolism; CTP biosynthesis via de novo pathway; UDP from UMP (UMPK route): step 1/1. Allosterically activated by GTP. Inhibited by UTP. Functionally, catalyzes the reversible phosphorylation of UMP to UDP. The sequence is that of Uridylate kinase from Sulfurimonas denitrificans (strain ATCC 33889 / DSM 1251) (Thiomicrospira denitrificans (strain ATCC 33889 / DSM 1251)).